Consider the following 481-residue polypeptide: Protein DETOXIFICATION 12 (481 aa).

A run of 12 helical transmembrane segments spans residues 38–58 (LIFF…LQIV), 76–96 (LASS…SCAL), 117–137 (YTAM…WFNM), 154–174 (AGKY…LQPL), 187–207 (LLIT…FLVY), 214–234 (LGGA…LGSF), 267–287 (AAMI…SGLL), 296–316 (VLSV…AIAA), 336–356 (IVVY…SMSL), 380–400 (MAPL…LSGI), 415–435 (LGAF…WIHL), and 438–458 (VGLW…LALV).

This sequence belongs to the multi antimicrobial extrusion (MATE) (TC 2.A.66.1) family.

Its subcellular location is the membrane. This Arabidopsis thaliana (Mouse-ear cress) protein is Protein DETOXIFICATION 12.